Reading from the N-terminus, the 169-residue chain is Peptide methionine sulfoxide reductase MsrA (169 aa).

Residue Cys-10 is part of the active site.

Belongs to the MsrA Met sulfoxide reductase family.

The catalysed reaction is L-methionyl-[protein] + [thioredoxin]-disulfide + H2O = L-methionyl-(S)-S-oxide-[protein] + [thioredoxin]-dithiol. The enzyme catalyses [thioredoxin]-disulfide + L-methionine + H2O = L-methionine (S)-S-oxide + [thioredoxin]-dithiol. Has an important function as a repair enzyme for proteins that have been inactivated by oxidation. Catalyzes the reversible oxidation-reduction of methionine sulfoxide in proteins to methionine. In Streptococcus pyogenes serotype M1, this protein is Peptide methionine sulfoxide reductase MsrA.